We begin with the raw amino-acid sequence, 281 residues long: Predicted GPI-anchored protein 39 (281 aa).

The N-terminal stretch at 1–18 (MKATTFTLLLSIATAINA) is a signal peptide. Disordered stretches follow at residues 52–94 (HHHG…SASV) and 106–227 (VSVS…SSSE). Composition is skewed to low complexity over residues 69–94 (SSSSVSESTVEELSTTTTTESVSASV), 106–158 (VSVS…STTD), 167–203 (ATDSVETTFESVSNTEDLSSSSSSIITDSSESTIEET), and 210–227 (SVPSSLSEEYSTSGSSSE). The N-linked (GlcNAc...) asparagine glycan is linked to asparagine 150. Asparagine 239, asparagine 246, asparagine 249, and asparagine 252 each carry an N-linked (GlcNAc...) asparagine glycan. Residue serine 256 is the site of GPI-anchor amidated serine attachment. Positions 257–281 (ANFAIQYGTDYGVAVVAAIVGALLI) are cleaved as a propeptide — removed in mature form.

The protein resides in the cell membrane. The polypeptide is Predicted GPI-anchored protein 39 (PGA39) (Candida albicans (strain SC5314 / ATCC MYA-2876) (Yeast)).